The sequence spans 218 residues: DNA ADP-ribosyl transferase (218 aa).

One can recognise a DarT domain in the interval 14–217 (ALIWRIVHRD…SVHTRSGWYF (204 aa)). NAD(+) contacts are provided by residues 18–20 (RIV) and R57. The NAD(+)-binding element stretch occupies residues 41–59 (QAENWINIGNPELIGKRAG). The active-site Proton acceptor is R57. The ADP-ribosylating turn-turn loop stretch occupies residues 123 to 170 (TDSHAYYNWTNYYTSLNSLDQIDWPILQARDFRRDPDDPAKFERYQAE). Residue E170 is part of the active site.

Belongs to the DarT ADP-ribosyltransferase family. As to quaternary structure, interacts with cognate antitoxin DarG (via C-terminus); this heterodimeric complex neutralizes the toxic effect of DarT by preventing ssDNA binding to DarT and consequently inactivating the toxin by direct protein-protein interactions.

The enzyme catalyses a thymidine in DNA + NAD(+) = an N-(ADP-alpha-D-ribosyl)-thymidine in DNA + nicotinamide + H(+). In terms of biological role, toxic component of the hybrid type II/IV toxin-antitoxin (TA) system DarTG, which plays a crucial role in controlling bacterial growth and bacteriophage infection. ADP-ribosylates ssDNA in the sequence TTT/TCT. In case of phage infection, DarT toxin ADP-ribosylates DNA, which inhibits both viral DNA and RNA synthesis and leads to abortive infection. Its toxic effect is neutralized by cognate antitoxin DarG. May target ssDNA loops during DNA replication, probably modifies thymidine. Wild-type protein cannot be expressed at low levels in the absence of its cognate antitoxin, but a mutant protein (G49D) can be expressed, which slows growth, rapidly inhibits DNA replication, and induces RecA expression and the SOS response. The slow growth phenotype can be suppressed by cognate antitoxin DarG. Has no activity on dsDNA in vitro. In vivo ADP-ribosylates genomic DNA (gDNA). Genetic data strongly suggests ADP-ribosylation by DarT probably generates ssDNA gaps that are repaired by the RecFOR-mediated homologous recombination pathway (RuvAB, RecG) and resolved by RuvC. In some cases these gaps probably migrate into dsDNA, where they are resolved by nucleotide excision repair (NER) detected by UvrAB, excised by UvrC, removed by UvrD, and repaired by Pol I and ligase. Other pathways may also be involved in ADP-ribosylation removal from DNA. The chain is DNA ADP-ribosyl transferase from Escherichia coli O127:H6 (strain E2348/69 / EPEC).